A 318-amino-acid chain; its full sequence is tRNA-dihydrouridine(16) synthase (318 aa).

Residues 7 to 9 (PME) and glutamine 68 each bind FMN. Cysteine 98 (proton donor) is an active-site residue. FMN contacts are provided by residues lysine 139, 200–202 (NGE), and 224–225 (CR).

It belongs to the Dus family. DusC subfamily. FMN is required as a cofactor.

The catalysed reaction is 5,6-dihydrouridine(16) in tRNA + NADP(+) = uridine(16) in tRNA + NADPH + H(+). It catalyses the reaction 5,6-dihydrouridine(16) in tRNA + NAD(+) = uridine(16) in tRNA + NADH + H(+). Its function is as follows. Catalyzes the synthesis of 5,6-dihydrouridine (D), a modified base found in the D-loop of most tRNAs, via the reduction of the C5-C6 double bond in target uridines. Specifically modifies U16 in tRNAs. In Vibrio vulnificus (strain CMCP6), this protein is tRNA-dihydrouridine(16) synthase.